An 807-amino-acid polypeptide reads, in one-letter code: Ribosomal RNA large subunit methyltransferase K/L (807 aa).

In terms of domain architecture, THUMP spans 67–182 (QIYKICLWSR…EKQAEIFLDL (116 aa)). Polar residues predominate over residues 548-560 (NTQYGNPEASAQS). The interval 548–602 (NTQYGNPEASAQSKESKNAPEPKKDNRNRYKGNKFQQAREEAKRQEAQRLAQKKR) is disordered. Composition is skewed to basic and acidic residues over residues 561–575 (KESK…DNRN) and 584–594 (QAREEAKRQEA).

This sequence belongs to the methyltransferase superfamily. RlmKL family.

It is found in the cytoplasm. The catalysed reaction is guanosine(2445) in 23S rRNA + S-adenosyl-L-methionine = N(2)-methylguanosine(2445) in 23S rRNA + S-adenosyl-L-homocysteine + H(+). It carries out the reaction guanosine(2069) in 23S rRNA + S-adenosyl-L-methionine = N(2)-methylguanosine(2069) in 23S rRNA + S-adenosyl-L-homocysteine + H(+). Its function is as follows. Specifically methylates the guanine in position 2445 (m2G2445) and the guanine in position 2069 (m7G2069) of 23S rRNA. This chain is Ribosomal RNA large subunit methyltransferase K/L, found in Psychrobacter sp. (strain PRwf-1).